Here is a 516-residue protein sequence, read N- to C-terminus: Cytochrome P450 93G1 (516 aa).

Residues 11–31 form a helical membrane-spanning segment; sequence LLGMGTTMGALALALVVVVVV. C454 serves as a coordination point for heme.

Belongs to the cytochrome P450 family. It depends on heme as a cofactor.

The protein localises to the membrane. The enzyme catalyses a flavanone + reduced [NADPH--hemoprotein reductase] + O2 = a flavone + oxidized [NADPH--hemoprotein reductase] + 2 H2O + H(+). It functions in the pathway secondary metabolite biosynthesis; flavonoid biosynthesis. In terms of biological role, functions as a flavone synthase II (FNSII) that catalyzes the direct conversion of flavanones to flavones. In vitro, can convert naringenin and eriodictyol to apigenin and luteolin, respectively. Acts as a key branch point enzyme that channels flavanones to the biosynthesis of soluble tricin O-linked conjugates. This is Cytochrome P450 93G1 from Oryza sativa subsp. japonica (Rice).